We begin with the raw amino-acid sequence, 502 residues long: Chromatin structure-remodeling complex protein RSC58 (502 aa).

Positions 19 to 134 (SILNAASVKC…KFSSELLLRE (116 aa)) constitute a Bromo domain. Residues 336–378 (NEEGINRKQNDENNKNVDGKSNGVQDDGGDNDNDATIASANSE) form a disordered region. Basic and acidic residues predominate over residues 339-353 (GINRKQNDENNKNVD).

As to quaternary structure, component of the two forms of the RSC complex composed of at least either RSC1 or RSC2, and ARP7, ARP9, LDB7, NPL6, RSC3, RSC30, RSC4, RSC58, RSC6, RSC8, RSC9, SFH1, STH1, HTL1 and probably RTT102. The complexes interact with histone and histone variant components of centromeric chromatin.

The protein localises to the nucleus. Component of the chromatin structure-remodeling complex (RSC), which is involved in transcription regulation and nucleosome positioning. RSC is responsible for the transfer of a histone octamer from a nucleosome core particle to naked DNA. The reaction requires ATP and involves an activated RSC-nucleosome intermediate. Remodeling reaction also involves DNA translocation, DNA twist and conformational change. As a reconfigurer of centromeric and flanking nucleosomes, RSC complex is required both for proper kinetochore function in chromosome segregation and, via a PKC1-dependent signaling pathway, for organization of the cellular cytoskeleton. In Saccharomyces cerevisiae (strain ATCC 204508 / S288c) (Baker's yeast), this protein is Chromatin structure-remodeling complex protein RSC58 (RSC58).